A 166-amino-acid polypeptide reads, in one-letter code: uncharacterized protein (166 aa).

Positions 25–116 (PEEPPLWVPP…QGADEVHSQH (92 aa)) are disordered. Ser105 is subject to Phosphoserine.

This is an uncharacterized protein from Rattus norvegicus (Rat).